We begin with the raw amino-acid sequence, 346 residues long: 3 beta-hydroxysteroid dehydrogenase/Delta 5--&gt;4-isomerase (346 aa).

Tyr-147 functions as the Proton acceptor in the catalytic mechanism. Lys-151 is an NAD(+) binding site.

It belongs to the 3-beta-HSD family.

It carries out the reaction a 3beta-hydroxy-Delta(5)-steroid + NAD(+) = a 3-oxo-Delta(5)-steroid + NADH + H(+). The enzyme catalyses a 3-oxo-Delta(5)-steroid = a 3-oxo-Delta(4)-steroid. It functions in the pathway lipid metabolism; steroid biosynthesis. Catalyzes the oxidative conversion of Delta(5)-ene-3-beta-hydroxy steroid, and the oxidative conversion of ketosteroids. The 3-beta-HSD enzymatic system plays a crucial role in the biosynthesis of all classes of hormonal steroids. During viral infection, steroid production contributes to virulence by inhibiting the host inflammatory response. This chain is 3 beta-hydroxysteroid dehydrogenase/Delta 5--&gt;4-isomerase (OPG174), found in Vaccinia virus (strain Western Reserve) (VACV).